Consider the following 298-residue polypeptide: Cyclin-dependent kinase 2 (298 aa).

The residue at position 1 (methionine 1) is an N-acetylmethionine. In terms of domain architecture, Protein kinase spans 4–286 (FQKVEKIGEG…AKAALAHPFF (283 aa)). Lysine 6 bears the N6-acetyllysine mark. 10–18 (IGEGTYGVV) is a binding site for ATP. Threonine 14 bears the Phosphothreonine mark. At tyrosine 15 the chain carries Phosphotyrosine; by WEE1. Tyrosine 19 carries the phosphotyrosine modification. ATP is bound by residues lysine 33, 81–83 (EFL), and aspartate 86. Residue aspartate 127 is the Proton acceptor of the active site. ATP is bound by residues 129-132 (KPQN) and aspartate 145. Residues asparagine 132 and aspartate 145 each coordinate Mg(2+). Threonine 160 is modified (phosphothreonine; by CAK and CCRK).

The protein belongs to the protein kinase superfamily. CMGC Ser/Thr protein kinase family. CDC2/CDKX subfamily. As to quaternary structure, found in a complex with CABLES1, CCNA1 and CCNE1. Interacts with CABLES1. Interacts with UHRF2. Part of a complex consisting of UHRF2, CDK2 and CCNE1. Interacts with the Speedy/Ringo proteins SPDYA and SPDYC. Interaction with SPDYA promotes kinase activation via a conformation change that alleviates obstruction of the substrate-binding cleft by the T-loop. Found in a complex with both SPDYA and CDKN1B/KIP1. Binds to RB1 and CDK7. Binding to CDKN1A (p21) leads to CDK2/cyclin E inactivation at the G1-S phase DNA damage checkpoint, thereby arresting cells at the G1-S transition during DNA repair. Associated with PTPN6 and beta-catenin/CTNNB1. Interacts with CACUL1. May interact with CEP63. Interacts with ANKRD17. Interacts with CEBPA (when phosphorylated). Forms a ternary complex with CCNA2 and CDKN1B; CDKN1B inhibits the kinase activity of CDK2 through conformational rearrangements. Interacts with cyclins A, B1, B3, D, or E. Interacts with CDK2AP2. Mg(2+) is required as a cofactor. Post-translationally, phosphorylated at Thr-160 by CDK7 in a CAK complex. Phosphorylation at Thr-160 promotes kinase activity, whereas phosphorylation at Tyr-15 by WEE1 reduces slightly kinase activity. Phosphorylated on Thr-14 and Tyr-15 during S and G2 phases before being dephosphorylated by CDC25A. In terms of processing, nitrosylated after treatment with nitric oxide (DETA-NO).

Its subcellular location is the cytoplasm. It is found in the cytoskeleton. It localises to the microtubule organizing center. The protein resides in the centrosome. The protein localises to the nucleus. Its subcellular location is the cajal body. It is found in the endosome. The enzyme catalyses L-seryl-[protein] + ATP = O-phospho-L-seryl-[protein] + ADP + H(+). It catalyses the reaction L-threonyl-[protein] + ATP = O-phospho-L-threonyl-[protein] + ADP + H(+). Its activity is regulated as follows. Phosphorylation at Thr-14 or Tyr-15 inactivates the enzyme, while phosphorylation at Thr-160 activates it. Stimulated by MYC. Inactivated by CDKN1A (p21). Serine/threonine-protein kinase involved in the control of the cell cycle; essential for meiosis, but dispensable for mitosis. Phosphorylates CABLES1, CTNNB1, CDK2AP2, ERCC6, NBN, USP37, p53/TP53, NPM1, CDK7, RB1, BRCA2, MYC, NPAT, EZH2. Triggers duplication of centrosomes and DNA. Acts at the G1-S transition to promote the E2F transcriptional program and the initiation of DNA synthesis, and modulates G2 progression; controls the timing of entry into mitosis/meiosis by controlling the subsequent activation of cyclin B/CDK1 by phosphorylation, and coordinates the activation of cyclin B/CDK1 at the centrosome and in the nucleus. Crucial role in orchestrating a fine balance between cellular proliferation, cell death, and DNA repair in embryonic stem cells (ESCs). Activity of CDK2 is maximal during S phase and G2; activated by interaction with cyclin E during the early stages of DNA synthesis to permit G1-S transition, and subsequently activated by cyclin A2 (cyclin A1 in germ cells) during the late stages of DNA replication to drive the transition from S phase to mitosis, the G2 phase. EZH2 phosphorylation promotes H3K27me3 maintenance and epigenetic gene silencing. Cyclin E/CDK2 prevents oxidative stress-mediated Ras-induced senescence by phosphorylating MYC. Involved in G1-S phase DNA damage checkpoint that prevents cells with damaged DNA from initiating mitosis; regulates homologous recombination-dependent repair by phosphorylating BRCA2, this phosphorylation is low in S phase when recombination is active, but increases as cells progress towards mitosis. In response to DNA damage, double-strand break repair by homologous recombination a reduction of CDK2-mediated BRCA2 phosphorylation. Involved in regulation of telomere repair by mediating phosphorylation of NBN. Phosphorylation of RB1 disturbs its interaction with E2F1. NPM1 phosphorylation by cyclin E/CDK2 promotes its dissociation from unduplicated centrosomes, thus initiating centrosome duplication. Cyclin E/CDK2-mediated phosphorylation of NPAT at G1-S transition and until prophase stimulates the NPAT-mediated activation of histone gene transcription during S phase. Required for vitamin D-mediated growth inhibition by being itself inactivated. Involved in the nitric oxide- (NO) mediated signaling in a nitrosylation/activation-dependent manner. USP37 is activated by phosphorylation and thus triggers G1-S transition. CTNNB1 phosphorylation regulates insulin internalization. Phosphorylates FOXP3 and negatively regulates its transcriptional activity and protein stability. Phosphorylates ERCC6 which is essential for its chromatin remodeling activity at DNA double-strand breaks. Acts as a regulator of the phosphatidylinositol 3-kinase/protein kinase B signal transduction by mediating phosphorylation of the C-terminus of protein kinase B (PKB/AKT1 and PKB/AKT2), promoting its activation. The protein is Cyclin-dependent kinase 2 (CDK2) of Bos taurus (Bovine).